The chain runs to 96 residues: Large ribosomal subunit protein uL23 (96 aa).

This sequence belongs to the universal ribosomal protein uL23 family. Part of the 50S ribosomal subunit. Contacts protein L29, and trigger factor when it is bound to the ribosome.

In terms of biological role, one of the early assembly proteins it binds 23S rRNA. One of the proteins that surrounds the polypeptide exit tunnel on the outside of the ribosome. Forms the main docking site for trigger factor binding to the ribosome. The polypeptide is Large ribosomal subunit protein uL23 (Halalkalibacterium halodurans (strain ATCC BAA-125 / DSM 18197 / FERM 7344 / JCM 9153 / C-125) (Bacillus halodurans)).